We begin with the raw amino-acid sequence, 542 residues long: CTP synthase (542 aa).

Residues 1 to 266 (MATNYIFVTG…DEFVCNRFHL (266 aa)) are amidoligase domain. Serine 14 serves as a coordination point for CTP. A UTP-binding site is contributed by serine 14. Residues 15–20 (SLGKGI) and aspartate 72 contribute to the ATP site. Mg(2+) contacts are provided by aspartate 72 and glutamate 140. CTP contacts are provided by residues 147 to 149 (DIE), 187 to 192 (KTKPTQ), and lysine 223. Residues 187 to 192 (KTKPTQ) and lysine 223 contribute to the UTP site. 239–241 (KDV) is an ATP binding site. The Glutamine amidotransferase type-1 domain maps to 291 to 542 (TIGMVGKYVE…VKAAKENQKK (252 aa)). L-glutamine is bound at residue glycine 352. Cysteine 379 (nucleophile; for glutamine hydrolysis) is an active-site residue. L-glutamine contacts are provided by residues 380–383 (LGMQ), glutamate 403, and arginine 470. Residues histidine 515 and glutamate 517 contribute to the active site.

This sequence belongs to the CTP synthase family. Homotetramer.

The enzyme catalyses UTP + L-glutamine + ATP + H2O = CTP + L-glutamate + ADP + phosphate + 2 H(+). It catalyses the reaction L-glutamine + H2O = L-glutamate + NH4(+). The catalysed reaction is UTP + NH4(+) + ATP = CTP + ADP + phosphate + 2 H(+). The protein operates within pyrimidine metabolism; CTP biosynthesis via de novo pathway; CTP from UDP: step 2/2. Allosterically activated by GTP, when glutamine is the substrate; GTP has no effect on the reaction when ammonia is the substrate. The allosteric effector GTP functions by stabilizing the protein conformation that binds the tetrahedral intermediate(s) formed during glutamine hydrolysis. Inhibited by the product CTP, via allosteric rather than competitive inhibition. In terms of biological role, catalyzes the ATP-dependent amination of UTP to CTP with either L-glutamine or ammonia as the source of nitrogen. Regulates intracellular CTP levels through interactions with the four ribonucleotide triphosphates. This chain is CTP synthase, found in Actinobacillus succinogenes (strain ATCC 55618 / DSM 22257 / CCUG 43843 / 130Z).